The primary structure comprises 286 residues: Deleted in azoospermia-like (286 aa).

In terms of domain architecture, RRM spans 30-105 (NTVFVGGIDI…KKLKLGPAIR (76 aa)). A DAZ domain is found at 155 to 180 (ACPYPSSPPMAIQQIPVGCQQPSYFQ).

Belongs to the RRM DAZ family. As to quaternary structure, interacts with the C-terminus of pabp1 and with epabp. Prior to oocyte maturation, found in a complex with epabp and pum2 proteins and spdy1 mRNA; pum2 dissociates from the complex during maturation. As to expression, germ-line specific; expressed in adult testis and ovary. Localized specifically to the oocyte and embryonic germ plasm and to migrating primordial germ cells (PGCs).

It localises to the cytoplasm. Functionally, RNA-binding protein that is required for primordial germ cell (PGC) differentiation and indirectly necessary for the migration of PGCs through the endoderm. May promote meiotic cell division during spermatogenesis. Shows a preference for G- and U-rich RNAs and probably binds the 3'-UTR of target mRNAs. Stimulates the initiation of translation of mRNAs through the recruitment of poly(A)-binding proteins (PABPs). In Xenopus tropicalis (Western clawed frog), this protein is Deleted in azoospermia-like.